A 1378-amino-acid polypeptide reads, in one-letter code: Attractin-like protein 1 (1378 aa).

Residues 1-51 (MEPGVRARSGAPQPASPVLWRARPAGGGGASSWLLLDGNSWLLCYGFLYLA) form the signal peptide. The 39-residue stretch at 52-90 (LYAQVSQSKPCERTGSCFSGRCVNSTCLCDPGWVGDQCQ) folds into the EGF-like 1 domain. At 52–1229 (LYAQVSQSKP…FSQHNTIMDL (1178 aa)) the chain is on the extracellular side. 3 disulfide bridges follow: Cys62–Cys78, Cys80–Cys89, and Cys92–Cys118. Asn75 carries an N-linked (GlcNAc...) asparagine glycan. The CUB domain occupies 92-208 (CQGRFKLTEP…TGFNIFYSIN (117 aa)). Asn173 and Asn197 each carry an N-linked (GlcNAc...) asparagine glycan. The region spanning 206 to 244 (SINSCPNNCSGHGKCTTSVSVASQVYCECDKYWKGEACD) is the EGF-like 2 domain. Disulfide bonds link Cys210-Cys220, Cys214-Cys232, and Cys234-Cys243. 6 Kelch repeats span residues 315–364 (FMWV…LYQE), 366–414 (IFMY…EGHS), 426–474 (VMIV…SVYD), 479–530 (SIYV…LING), 532–590 (MLIF…VING), and 591–637 (SMYI…WNKN). Asn379 carries N-linked (GlcNAc...) asparagine glycosylation. PSI domains follow at residues 613–656 (NCKA…AKCP), 665–708 (RCYR…TKCH), and 714–759 (ICNK…DACL). N-linked (GlcNAc...) asparagine glycosylation occurs at Asn703. The C-type lectin domain occupies 754-872 (VGDACLRINS…TSMADGLVCE (119 aa)). Cys775 and Cys871 are oxidised to a cystine. 2 N-linked (GlcNAc...) asparagine glycosylation sites follow: Asn777 and Asn897. PSI domains are found at residues 888-938 (PCSL…ATCS) and 941-1011 (NCSG…IQCP). 8 disulfides stabilise this stretch: Cys1013-Cys1021, Cys1015-Cys1027, Cys1030-Cys1039, Cys1042-Cys1056, Cys1059-Cys1068, Cys1061-Cys1075, Cys1077-Cys1087, and Cys1090-Cys1105. Laminin EGF-like domains follow at residues 1013–1058 (CQCN…QCTA) and 1059–1107 (CTCG…TCYY). Asn1156 carries an N-linked (GlcNAc...) asparagine glycan. Residues 1230-1250 (VQFFVTFFSCFLSLLLVAAVV) form a helical membrane-spanning segment. The Cytoplasmic segment spans residues 1251–1378 (WKIKQTCWAS…HLSTRQGTCV (128 aa)). The interval 1287–1324 (VGAEQTDFLRGPLEGAPKPIAIEPCAGNRAAVLTVFLC) is interaction with MC4R. Residues 1351 to 1378 (QQKPSDNKDKTSGVRNRKHLSTRQGTCV) are disordered.

Interacts with MC4R. In terms of tissue distribution, highly expressed in brain, heart, lung, kidney and liver. In the central nervous system, it is highly expressed in the dentate gyrus, CA1-3 regions of the hippocampus, and the ventral taenia tecta.

It is found in the cell membrane. Its function is as follows. May play a role in melanocortin signaling pathways that regulate energy homeostasis. In Mus musculus (Mouse), this protein is Attractin-like protein 1 (Atrnl1).